Consider the following 220-residue polypeptide: Claudin-24 (220 aa).

At M1–Q10 the chain is on the cytoplasmic side. The helical transmembrane segment at S11–P31 threads the bilayer. Over H32–R81 the chain is Extracellular. A helical transmembrane segment spans residues I82–L102. Residues D103–R117 lie on the Cytoplasmic side of the membrane. A helical membrane pass occupies residues L118–S138. At W139–E161 the chain is on the extracellular side. The chain crosses the membrane as a helical span at residues F162 to L182. The Cytoplasmic portion of the chain corresponds to L183–V220.

This sequence belongs to the claudin family.

It is found in the cell junction. Its subcellular location is the tight junction. The protein localises to the cell membrane. In terms of biological role, plays a major role in tight junction-specific obliteration of the intercellular space, through calcium-independent cell-adhesion activity. The chain is Claudin-24 from Homo sapiens (Human).